The chain runs to 331 residues: Glyceraldehyde-3-phosphate dehydrogenase (331 aa).

NAD(+) is bound by residues 12 to 13 (RI), aspartate 34, arginine 78, and threonine 120. Residues 149–151 (SCT), threonine 180, 209–210 (TG), and arginine 232 contribute to the D-glyceraldehyde 3-phosphate site. Cysteine 150 functions as the Nucleophile in the catalytic mechanism. Asparagine 314 serves as a coordination point for NAD(+).

It belongs to the glyceraldehyde-3-phosphate dehydrogenase family. As to quaternary structure, homotetramer.

The protein resides in the cytoplasm. It catalyses the reaction D-glyceraldehyde 3-phosphate + phosphate + NAD(+) = (2R)-3-phospho-glyceroyl phosphate + NADH + H(+). It functions in the pathway carbohydrate degradation; glycolysis; pyruvate from D-glyceraldehyde 3-phosphate: step 1/5. Catalyzes the oxidative phosphorylation of glyceraldehyde 3-phosphate (G3P) to 1,3-bisphosphoglycerate (BPG) using the cofactor NAD. The first reaction step involves the formation of a hemiacetal intermediate between G3P and a cysteine residue, and this hemiacetal intermediate is then oxidized to a thioester, with concomitant reduction of NAD to NADH. The reduced NADH is then exchanged with the second NAD, and the thioester is attacked by a nucleophilic inorganic phosphate to produce BPG. This Shimwellia blattae (strain ATCC 29907 / DSM 4481 / JCM 1650 / NBRC 105725 / CDC 9005-74) (Escherichia blattae) protein is Glyceraldehyde-3-phosphate dehydrogenase (gapA).